Consider the following 106-residue polypeptide: Small ribosomal subunit protein bS16 (106 aa).

The protein belongs to the bacterial ribosomal protein bS16 family.

The sequence is that of Small ribosomal subunit protein bS16 from Wolbachia sp. subsp. Brugia malayi (strain TRS).